The primary structure comprises 121 residues: Phosphoribosyl-ATP pyrophosphatase (121 aa).

The protein belongs to the PRA-PH family.

It is found in the cytoplasm. The enzyme catalyses 1-(5-phospho-beta-D-ribosyl)-ATP + H2O = 1-(5-phospho-beta-D-ribosyl)-5'-AMP + diphosphate + H(+). It participates in amino-acid biosynthesis; L-histidine biosynthesis; L-histidine from 5-phospho-alpha-D-ribose 1-diphosphate: step 2/9. This Burkholderia ambifaria (strain MC40-6) protein is Phosphoribosyl-ATP pyrophosphatase.